Reading from the N-terminus, the 570-residue chain is Apyrase (570 aa).

Positions 1-23 (MALVRFATIITVLCHLAIQDGAA) are cleaved as a signal peptide. A divalent metal cation contacts are provided by Asp-43, His-45, and Asp-94. Asn-108 carries N-linked (GlcNAc...) asparagine glycosylation. A divalent metal cation-binding residues include Asn-126, His-229, and His-253. Residues Asn-287 and Asn-326 are each glycosylated (N-linked (GlcNAc...) asparagine). Arg-367 lines the AMP pocket. Asn-387 carries N-linked (GlcNAc...) asparagine glycosylation. AMP-binding residues include Arg-402 and Asp-507. Residues Asn-552 and Asn-555 are each glycosylated (N-linked (GlcNAc...) asparagine).

The protein belongs to the 5'-nucleotidase family. In terms of assembly, interacts with human PLAT; the interaction results in PLAT activation probably via an allosteric activation mechanism. A divalent metal cation serves as cofactor. As to expression, saliva (at protein level). Salivary gland (at protein level). Not detected in midgut.

It is found in the secreted. It carries out the reaction a ribonucleoside 5'-triphosphate + 2 H2O = a ribonucleoside 5'-phosphate + 2 phosphate + 2 H(+). In terms of biological role, cleaves adenosine triphosphate (ATP) and adenosine diphosphate (ADP) to adenosine monophosphate (AMP) and inorganic phosphate. Enhances fibrin degradation in the midgut blood bolus. Activates human tissue plasminogen activator (PLAT), probably via an allosteric activation mechanism. Inhibits ADP-mediated host platelet aggregation in vitro and in mosquito midgut. Inhibits host neutrophil activation in the mosquito midgut: reduces neutrophil extracellular traps formation in the presence of platelets and the formation of total cell- and mitochondrial-derived reactive oxygen species. (Microbial infection) Promotes Plasmodium berghei parasite transmission from the mammalian host to the mosquito probably by reducing the blood bolus viscosity. Facilitates sporozoite transmission from the mosquito to the mammalian host during blood feeding. This Anopheles gambiae (African malaria mosquito) protein is Apyrase.